The following is a 340-amino-acid chain: Heat-inducible transcription repressor HrcA (340 aa).

It belongs to the HrcA family.

Functionally, negative regulator of class I heat shock genes (grpE-dnaK-dnaJ and groELS operons). Prevents heat-shock induction of these operons. The polypeptide is Heat-inducible transcription repressor HrcA (Burkholderia vietnamiensis (strain G4 / LMG 22486) (Burkholderia cepacia (strain R1808))).